Reading from the N-terminus, the 69-residue chain is Cytochrome c oxidase subunit 8A, mitochondrial (69 aa).

The N-terminal 25 residues, 1–25, are a transit peptide targeting the mitochondrion; that stretch reads MSVLTPLLLRGLTGSARRLPVLRAQ. Residues 2-19 carry the SIFI-degron motif; it reads SVLTPLLLRGLTGSARRL. Residues 26 to 36 lie on the Mitochondrial matrix side of the membrane; that stretch reads VHSKPPREKLG. A helical transmembrane segment spans residues 37 to 60; that stretch reads TMDVAIGLTSCFVCFLLPSGWVLS. Topologically, residues 61–69 are mitochondrial intermembrane; that stretch reads HLETYKKRE.

It belongs to the cytochrome c oxidase VIII family. Component of the cytochrome c oxidase (complex IV, CIV), a multisubunit enzyme composed of 14 subunits. The complex is composed of a catalytic core of 3 subunits MT-CO1, MT-CO2 and MT-CO3, encoded in the mitochondrial DNA, and 11 supernumerary subunits COX4I, COX5A, COX5B, COX6A, COX6B, COX6C, COX7A, COX7B, COX7C, COX8 and NDUFA4, which are encoded in the nuclear genome. The complex exists as a monomer or a dimer and forms supercomplexes (SCs) in the inner mitochondrial membrane with NADH-ubiquinone oxidoreductase (complex I, CI) and ubiquinol-cytochrome c oxidoreductase (cytochrome b-c1 complex, complex III, CIII), resulting in different assemblies (supercomplex SCI(1)III(2)IV(1) and megacomplex MCI(2)III(2)IV(2)). In terms of processing, in response to mitochondrial stress, the precursor protein is ubiquitinated by the SIFI complex in the cytoplasm before mitochondrial import, leading to its degradation. Within the SIFI complex, UBR4 initiates ubiquitin chain that are further elongated or branched by KCMF1.

The protein resides in the mitochondrion inner membrane. It functions in the pathway energy metabolism; oxidative phosphorylation. In terms of biological role, component of the cytochrome c oxidase, the last enzyme in the mitochondrial electron transport chain which drives oxidative phosphorylation. The respiratory chain contains 3 multisubunit complexes succinate dehydrogenase (complex II, CII), ubiquinol-cytochrome c oxidoreductase (cytochrome b-c1 complex, complex III, CIII) and cytochrome c oxidase (complex IV, CIV), that cooperate to transfer electrons derived from NADH and succinate to molecular oxygen, creating an electrochemical gradient over the inner membrane that drives transmembrane transport and the ATP synthase. Cytochrome c oxidase is the component of the respiratory chain that catalyzes the reduction of oxygen to water. Electrons originating from reduced cytochrome c in the intermembrane space (IMS) are transferred via the dinuclear copper A center (CU(A)) of subunit 2 and heme A of subunit 1 to the active site in subunit 1, a binuclear center (BNC) formed by heme A3 and copper B (CU(B)). The BNC reduces molecular oxygen to 2 water molecules using 4 electrons from cytochrome c in the IMS and 4 protons from the mitochondrial matrix. In Eulemur fulvus fulvus (Brown lemur), this protein is Cytochrome c oxidase subunit 8A, mitochondrial (COX8A).